The primary structure comprises 776 residues: Transferrin receptor protein 1 (776 aa).

Topologically, residues 1–70 are cytoplasmic; the sequence is MDHARAALSN…QPQRNGKRLC (70 aa). The short motif at 19–22 is the Endocytosis signal element; it reads YTRF. At serine 23 the chain carries Phosphoserine. Cysteine 70 carries the S-palmitoyl cysteine lipid modification. The chain crosses the membrane as a helical; Signal-anchor for type II membrane protein span at residues 71 to 91; the sequence is FLVIAAVLLLLIGFLIGYLSY. At 92–776 the chain is on the extracellular side; sequence RGRIELAARC…GDIWETDNEF (685 aa). A PA domain is found at 230-322; it reads SESGSVSGKP…GTGDPYTPGF (93 aa). Residues asparagine 261, asparagine 326, and asparagine 391 are each glycosylated (N-linked (GlcNAc...) asparagine). The interval 586 to 776 is ligand-binding; that stretch reads KGDTLENLRK…GDIWETDNEF (191 aa). The short motif at 662–664 is the Cell attachment site element; sequence RGD. Residue asparagine 738 is glycosylated (N-linked (GlcNAc...) asparagine).

It belongs to the peptidase M28 family. M28B subfamily. As to quaternary structure, homodimer; disulfide-linked. Binds one transferrin molecule per subunit. In terms of processing, stearoylated. Stearoylation does not affect iron uptake. Post-translationally, N- and O-glycosylated, phosphorylated and palmitoylated.

It is found in the cell membrane. Its subcellular location is the melanosome. Cellular uptake of iron occurs via receptor-mediated endocytosis of ligand-occupied transferrin receptor into specialized endosomes. Endosomal acidification leads to iron release. The apotransferrin-receptor complex is then recycled to the cell surface with a return to neutral pH and the concomitant loss of affinity of apotransferrin for its receptor. Transferrin receptor is necessary for development of erythrocytes and the nervous system. Acts as a lipid sensor that regulates mitochondrial fusion by regulating activation of the JNK pathway. When dietary levels of stearate (C18:0) are low, promotes activation of the JNK pathway, resulting in HUWE1-mediated ubiquitination and subsequent degradation of the mitofusin MFN2 and inhibition of mitochondrial fusion. When dietary levels of stearate (C18:0) are high, TFRC stearoylation inhibits activation of the JNK pathway and thus degradation of the mitofusin MFN2. Mediates uptake of NICOL1 into fibroblasts where it may regulate extracellular matrix production. This Gallus gallus (Chicken) protein is Transferrin receptor protein 1 (TFRC).